The chain runs to 597 residues: Aspartate--tRNA(Asp/Asn) ligase (597 aa).

Position 175 (Glu175) interacts with L-aspartate. Positions 199-202 (QQYK) are aspartate. Residues Arg221 and His454 each contribute to the L-aspartate site. 221-223 (RDE) contributes to the ATP binding site. Residue Glu488 coordinates ATP. Residue Arg495 coordinates L-aspartate. 540-543 (GIDR) contacts ATP.

The protein belongs to the class-II aminoacyl-tRNA synthetase family. Type 1 subfamily. As to quaternary structure, homodimer.

It is found in the cytoplasm. It catalyses the reaction tRNA(Asx) + L-aspartate + ATP = L-aspartyl-tRNA(Asx) + AMP + diphosphate. Its function is as follows. Aspartyl-tRNA synthetase with relaxed tRNA specificity since it is able to aspartylate not only its cognate tRNA(Asp) but also tRNA(Asn). Reaction proceeds in two steps: L-aspartate is first activated by ATP to form Asp-AMP and then transferred to the acceptor end of tRNA(Asp/Asn). The polypeptide is Aspartate--tRNA(Asp/Asn) ligase (Bartonella tribocorum (strain CIP 105476 / IBS 506)).